The chain runs to 160 residues: Bacterial microcompartment shell protein PduK (160 aa).

Residues Ser-11–Thr-96 enclose the BMC domain.

The protein belongs to the bacterial microcompartments protein family. In terms of assembly, interacts with shell proteins PduA and PduP and assembly protein PduM. Fe cation is required as a cofactor.

The protein localises to the bacterial microcompartment. The protein operates within polyol metabolism; 1,2-propanediol degradation. Functionally, a minor shell protein of the bacterial microcompartment (BMC) dedicated to 1,2-propanediol (1,2-PD) degradation. The isolated BMC shell component protein ratio for J:A:B':B:K:T:U is approximately 15:10:7:6:1:1:2. Not required for structural integrity of BMCs nor to mitigate propionaldehyde toxicity, it might be involved in spatial organization of BMCs. Its function is as follows. The 1,2-PD-specific bacterial microcompartment (BMC) concentrates low levels of 1,2-PD catabolic enzymes, concentrates volatile reaction intermediates thus enhancing pathway flux and keeps the level of toxic, mutagenic propionaldehyde low. In Salmonella typhimurium (strain LT2 / SGSC1412 / ATCC 700720), this protein is Bacterial microcompartment shell protein PduK.